The chain runs to 450 residues: Bifunctional protein GlmU (450 aa).

Residues 1–228 are pyrophosphorylase; it reads MSTALVILAA…EAQTLGVNSR (228 aa). Residues 8-11, K22, Q75, 80-81, 103-105, G140, E154, N169, and N226 each bind UDP-N-acetyl-alpha-D-glucosamine; these read LAAG, GT, and YGD. D105 is a Mg(2+) binding site. Mg(2+) is bound at residue N226. The segment at 229 to 249 is linker; that stretch reads ADLAAADAIFQTRARAELLDL. Residues 250–450 form an N-acetyltransferase region; it reads GVTLMAPETV…AKKASKQKET (201 aa). R315 and K333 together coordinate UDP-N-acetyl-alpha-D-glucosamine. The active-site Proton acceptor is H345. UDP-N-acetyl-alpha-D-glucosamine is bound by residues Y348 and N359. Acetyl-CoA-binding positions include A362, 368-369, S387, T405, and R422; that span reads NY.

The protein in the N-terminal section; belongs to the N-acetylglucosamine-1-phosphate uridyltransferase family. This sequence in the C-terminal section; belongs to the transferase hexapeptide repeat family. Homotrimer. The cofactor is Mg(2+).

The protein resides in the cytoplasm. The catalysed reaction is alpha-D-glucosamine 1-phosphate + acetyl-CoA = N-acetyl-alpha-D-glucosamine 1-phosphate + CoA + H(+). The enzyme catalyses N-acetyl-alpha-D-glucosamine 1-phosphate + UTP + H(+) = UDP-N-acetyl-alpha-D-glucosamine + diphosphate. The protein operates within nucleotide-sugar biosynthesis; UDP-N-acetyl-alpha-D-glucosamine biosynthesis; N-acetyl-alpha-D-glucosamine 1-phosphate from alpha-D-glucosamine 6-phosphate (route II): step 2/2. It functions in the pathway nucleotide-sugar biosynthesis; UDP-N-acetyl-alpha-D-glucosamine biosynthesis; UDP-N-acetyl-alpha-D-glucosamine from N-acetyl-alpha-D-glucosamine 1-phosphate: step 1/1. It participates in bacterial outer membrane biogenesis; LPS lipid A biosynthesis. Catalyzes the last two sequential reactions in the de novo biosynthetic pathway for UDP-N-acetylglucosamine (UDP-GlcNAc). The C-terminal domain catalyzes the transfer of acetyl group from acetyl coenzyme A to glucosamine-1-phosphate (GlcN-1-P) to produce N-acetylglucosamine-1-phosphate (GlcNAc-1-P), which is converted into UDP-GlcNAc by the transfer of uridine 5-monophosphate (from uridine 5-triphosphate), a reaction catalyzed by the N-terminal domain. The chain is Bifunctional protein GlmU from Ruegeria pomeroyi (strain ATCC 700808 / DSM 15171 / DSS-3) (Silicibacter pomeroyi).